The primary structure comprises 194 residues: ATP-dependent Clp protease proteolytic subunit (194 aa).

The active-site Nucleophile is the S97. The active site involves H122.

This sequence belongs to the peptidase S14 family. Fourteen ClpP subunits assemble into 2 heptameric rings which stack back to back to give a disk-like structure with a central cavity, resembling the structure of eukaryotic proteasomes.

It localises to the cytoplasm. It carries out the reaction Hydrolysis of proteins to small peptides in the presence of ATP and magnesium. alpha-casein is the usual test substrate. In the absence of ATP, only oligopeptides shorter than five residues are hydrolyzed (such as succinyl-Leu-Tyr-|-NHMec, and Leu-Tyr-Leu-|-Tyr-Trp, in which cleavage of the -Tyr-|-Leu- and -Tyr-|-Trp bonds also occurs).. Cleaves peptides in various proteins in a process that requires ATP hydrolysis. Has a chymotrypsin-like activity. Plays a major role in the degradation of misfolded proteins. This Lactobacillus helveticus (strain DPC 4571) protein is ATP-dependent Clp protease proteolytic subunit.